A 116-amino-acid chain; its full sequence is Mercuric transport protein MerT (116 aa).

The next 2 helical transmembrane spans lie at 16 to 36 and 46 to 66; these read LAAI…ALGF and VLEP…FFAW. Cysteine 24 and cysteine 25 together coordinate Hg(2+). Cysteine 76 and cysteine 82 together coordinate Hg(2+). A helical transmembrane segment spans residues 94–114; sequence IFWGVAVLVLVALGFPYVVPF.

This sequence belongs to the MerT family.

It localises to the cell inner membrane. Its function is as follows. Involved in mercury resistance. Probably transfers a mercuric ion from the periplasmic Hg(2+)-binding protein MerP to the cytoplasmic mercuric reductase MerA. In Pseudomonas fluorescens, this protein is Mercuric transport protein MerT.